Consider the following 298-residue polypeptide: MNQEVKSGKVLSPSTPWTQRPVPGIEVADEQQTLKATFTEPTIECPECHALVTRTAISFNAYVCPQCDEHLRMKARDRLNWFFDNVVAELGQEFSAKDPLKFVDSKPYPDRMREAQTKTGETEALIAMQGNLNGVDMIACAFEFDFMGGSMGTVVGDRFVKAAELAIEKRQPLICFAASGGARMQEGMLSLMQMARTSAAIQKLKDAGLPYIVVLTHPVYGGVTASLAMLGDIHIAEPKAMIGFAGKRVIEQTVRETLEEPFQRAEYLLDHGVVDQIVHRHALRDTVSRLVSKLMNLP.

The interval Met1–Pro21 is disordered. A CoA carboxyltransferase N-terminal domain is found at Pro41–Pro298. 4 residues coordinate Zn(2+): Cys45, Cys48, Cys64, and Cys67. A C4-type zinc finger spans residues Cys45 to Cys67.

It belongs to the AccD/PCCB family. In terms of assembly, acetyl-CoA carboxylase is a heterohexamer composed of biotin carboxyl carrier protein (AccB), biotin carboxylase (AccC) and two subunits each of ACCase subunit alpha (AccA) and ACCase subunit beta (AccD). Zn(2+) is required as a cofactor.

The protein localises to the cytoplasm. It carries out the reaction N(6)-carboxybiotinyl-L-lysyl-[protein] + acetyl-CoA = N(6)-biotinyl-L-lysyl-[protein] + malonyl-CoA. It participates in lipid metabolism; malonyl-CoA biosynthesis; malonyl-CoA from acetyl-CoA: step 1/1. Functionally, component of the acetyl coenzyme A carboxylase (ACC) complex. Biotin carboxylase (BC) catalyzes the carboxylation of biotin on its carrier protein (BCCP) and then the CO(2) group is transferred by the transcarboxylase to acetyl-CoA to form malonyl-CoA. This is Acetyl-coenzyme A carboxylase carboxyl transferase subunit beta from Acinetobacter baumannii (strain AYE).